A 100-amino-acid polypeptide reads, in one-letter code: NADH-quinone oxidoreductase subunit K (100 aa).

A run of 3 helical transmembrane segments spans residues 4–24 (LSHA…AIIV), 29–49 (LFIL…FVIV), and 60–80 (IMYI…LALL).

The protein belongs to the complex I subunit 4L family. NDH-1 is composed of 13 different subunits. Subunits NuoA, H, J, K, L, M, N constitute the membrane sector of the complex.

It is found in the cell inner membrane. It carries out the reaction a quinone + NADH + 5 H(+)(in) = a quinol + NAD(+) + 4 H(+)(out). NDH-1 shuttles electrons from NADH, via FMN and iron-sulfur (Fe-S) centers, to quinones in the respiratory chain. The immediate electron acceptor for the enzyme in this species is believed to be ubiquinone. Couples the redox reaction to proton translocation (for every two electrons transferred, four hydrogen ions are translocated across the cytoplasmic membrane), and thus conserves the redox energy in a proton gradient. This is NADH-quinone oxidoreductase subunit K from Blochmanniella pennsylvanica (strain BPEN).